The sequence spans 307 residues: D-alanine--D-alanine ligase (307 aa).

The ATP-grasp domain occupies 101 to 301; the sequence is KTVMRAAGVS…FGELVRWMVE (201 aa). 127-182 serves as a coordination point for ATP; sequence PLTPPYVVKPIAEGSSMGVIIVREERSHPPQILASDEWVYGEEVLAETYIAGRELT. The Mg(2+) site is built by D251, E268, and N270.

It belongs to the D-alanine--D-alanine ligase family. Mg(2+) is required as a cofactor. The cofactor is Mn(2+).

It localises to the cytoplasm. The catalysed reaction is 2 D-alanine + ATP = D-alanyl-D-alanine + ADP + phosphate + H(+). The protein operates within cell wall biogenesis; peptidoglycan biosynthesis. Its function is as follows. Cell wall formation. This chain is D-alanine--D-alanine ligase, found in Methylorubrum populi (strain ATCC BAA-705 / NCIMB 13946 / BJ001) (Methylobacterium populi).